A 592-amino-acid chain; its full sequence is MRFFKRFLLTLTVFIYTLRYLHCNADYALDESNCTCLRNFCQYSNANYWNDYLIEHNEYYKTVINPVATENYNLYIKPYCLIAREKSNLYYKLYLEEHVNNTLNNKYVARVAEEFLVFKESHCHYWKNHSVKYHDWIKLLHEKTENYIKNIKVKFNSLHDNLKGQFDEMKQDIHKNVKTLTSTLYTSTSTEETLVPSPASHSIDTKVEEVSGSHLIDNKKTDNTADEIQTTPELSEWELAQDEFNAWFKLVDTKSSKACKFLDQEVEDYLNEKIEPWELELNEKINHFRKEIHLQFNKLVKNIEDIDCTSEVDGETGEVIYFAKNGETQLSQYITRPFISSLFKEIESKFQALENNISTNLTNTIDELDKNIQEIHEHHVELYEEWGDIMISEWSKRMAYIEVVAAHYDSESDEDSSQEYWRNFLKLKKKVISIRDNLVEHHIKVTPLNQFLANVQNELNNITKESNEYLLVLRAKANLLFDEREKREEEEHNQKIILQRMENERIQSEQEERIKSLQKEEEEAEKLLEKEIQEKARKQEEARKQEEARKQEEARKQEEARKQEEARKQEEVRKQEEARKQMGSPPPPQQQQ.

The N-terminal stretch at 1–23 (MRFFKRFLLTLTVFIYTLRYLHC) is a signal peptide. Coiled coils occupy residues 354–385 (ENNI…LYEE) and 448–583 (LNQF…KQMG). Residues 507-580 (QSEQEERIKS…EVRKQEEARK (74 aa)) are compositionally biased toward basic and acidic residues. Residues 507–592 (QSEQEERIKS…GSPPPPQQQQ (86 aa)) form a disordered region.

It belongs to the SHE10 family. As to quaternary structure, component of the mitochondria-localized RNase mitochondrial RNA-processing (RNase MRP) composed of one single RNA encoded by the NME1 gene and at least 31 proteins. Absent in the nucleus-localized RNase MRP (NuMRP).

It localises to the mitochondrion. Its function is as follows. Involved in spore wall assembly. May be a component of the mitochondrial RNase MRP (MtMRP), a ribonucleoprotein endoribonuclease involved in the cleaving RNA transcripts to generate primers for DNA replication in mitochondria. The chain is Outer spore wall assembly protein SHE10 from Vanderwaltozyma polyspora (strain ATCC 22028 / DSM 70294 / BCRC 21397 / CBS 2163 / NBRC 10782 / NRRL Y-8283 / UCD 57-17) (Kluyveromyces polysporus).